We begin with the raw amino-acid sequence, 499 residues long: Alpha-amylase A type-3 (499 aa).

The first 21 residues, 1–21 (MMVAWWSLFLYGLQVAAPALA), serve as a signal peptide directing secretion. The cysteines at positions 51 and 59 are disulfide-linked. Trp104 is a binding site for substrate. A Ca(2+)-binding site is contributed by Asn142. His143 is a binding site for substrate. A disulfide bridge connects residues Cys171 and Cys185. Ca(2+) contacts are provided by Glu183 and Asp196. Asn218 is a glycosylation site (N-linked (GlcNAc...) asparagine). Residue Arg225 coordinates substrate. The Ca(2+) site is built by Asp227, His231, and Glu251. The Nucleophile role is filled by Asp227. 230–231 (KH) contacts substrate. The Proton donor role is filled by Glu251. Residue Gly255 participates in substrate binding. Cysteines 261 and 304 form a disulfide. Arg365 contributes to the substrate binding site. An intrachain disulfide couples Cys461 to Cys496.

Belongs to the glycosyl hydrolase 13 family. In terms of assembly, monomer. The cofactor is Ca(2+).

It localises to the secreted. It carries out the reaction Endohydrolysis of (1-&gt;4)-alpha-D-glucosidic linkages in polysaccharides containing three or more (1-&gt;4)-alpha-linked D-glucose units.. The chain is Alpha-amylase A type-3 (amy3) from Aspergillus oryzae (strain ATCC 42149 / RIB 40) (Yellow koji mold).